Consider the following 216-residue polypeptide: Ras-related protein Rab-5C (216 aa).

Positions 30, 31, 33, 34, 35, 36, 47, 48, 53, 79, 134, 135, 137, 165, and 166 each coordinate GTP. Serine 35 is a Mg(2+) binding site. 2 short sequence motifs (switch) span residues 45–57 (QFHE…IGAA) and 78–94 (AGQE…YRGA). Threonine 53 lines the Mg(2+) pocket. The tract at residues 184–216 (KNEPQNAPGGPGRNRVVDLQESSQPSRSQCCSN) is disordered. The segment covering 203–216 (QESSQPSRSQCCSN) has biased composition (polar residues). S-geranylgeranyl cysteine attachment occurs at residues cysteine 213 and cysteine 214.

This sequence belongs to the small GTPase superfamily. Rab family. It depends on Mg(2+) as a cofactor. As to expression, detected in brain, ovary, rectum, small intestine, large intestine, liver, spleen, follicle and kidney (at protein level).

It localises to the cell membrane. Its subcellular location is the early endosome membrane. It catalyses the reaction GTP + H2O = GDP + phosphate + H(+). Its activity is regulated as follows. Regulated by guanine nucleotide exchange factors (GEFs) which promote the exchange of bound GDP for free GTP. Regulated by GTPase activating proteins (GAPs) which increase the GTP hydrolysis activity. Inhibited by GDP dissociation inhibitors (GDIs). Functionally, the small GTPases Rab are key regulators of intracellular membrane trafficking, from the formation of transport vesicles to their fusion with membranes. Rabs cycle between an inactive GDP-bound form and an active GTP-bound form that is able to recruit to membranes different sets of downstream effectors directly responsible for vesicle formation, movement, tethering and fusion. This Gallus gallus (Chicken) protein is Ras-related protein Rab-5C (RAB5C).